The following is a 553-amino-acid chain: Probable malate:quinone oxidoreductase (553 aa).

Positions 524–553 (PPPKIDVNTPSQATGTAPARPAKASADMAL) are disordered.

The protein belongs to the MQO family. FAD is required as a cofactor.

The catalysed reaction is (S)-malate + a quinone = a quinol + oxaloacetate. It functions in the pathway carbohydrate metabolism; tricarboxylic acid cycle; oxaloacetate from (S)-malate (quinone route): step 1/1. This Burkholderia lata (strain ATCC 17760 / DSM 23089 / LMG 22485 / NCIMB 9086 / R18194 / 383) protein is Probable malate:quinone oxidoreductase.